The sequence spans 21 residues: Venom nerve growth factor Bco12 (21 aa).

This sequence belongs to the NGF-beta family. Homodimer; non-covalently linked. In terms of processing, glycosylated. As to expression, expressed by the venom gland.

Its subcellular location is the secreted. Nerve growth factor is important for the development and maintenance of the sympathetic and sensory nervous systems. It stimulates division and differentiation of sympathetic and embryonic sensory neurons as well as basal forebrain cholinergic neurons in the brain. Its relevance in the snake venom is not clear. However, it has been shown to inhibit metalloproteinase-dependent proteolysis of platelet glycoprotein Ib alpha, suggesting a metalloproteinase inhibition to prevent metalloprotease autodigestion and/or protection against prey proteases. Binds a lipid between the two protein chains in the homodimer. The lipid-bound form promotes histamine relase from mouse mast cells, contrary to the lipid-free form. This Bothrops cotiara (Cotiara) protein is Venom nerve growth factor Bco12.